Here is a 234-residue protein sequence, read N- to C-terminus: Sugar fermentation stimulation protein A (234 aa).

A DNA-binding region (H-T-H motif) is located at residues Leu201–Ser220.

The protein belongs to the SfsA family.

Functionally, binds to DNA non-specifically. Could be a regulatory factor involved in maltose metabolism. This is Sugar fermentation stimulation protein A from Shigella flexneri serotype 5b (strain 8401).